A 219-amino-acid polypeptide reads, in one-letter code: Ribose-5-phosphate isomerase A (219 aa).

Substrate-binding positions include 28 to 31 (SGST), 81 to 84 (DGAD), and 94 to 97 (KGGG). Catalysis depends on Glu103, which acts as the Proton acceptor. Residue Lys121 coordinates substrate.

This sequence belongs to the ribose 5-phosphate isomerase family. As to quaternary structure, homodimer.

It carries out the reaction aldehydo-D-ribose 5-phosphate = D-ribulose 5-phosphate. It functions in the pathway carbohydrate degradation; pentose phosphate pathway; D-ribose 5-phosphate from D-ribulose 5-phosphate (non-oxidative stage): step 1/1. Functionally, catalyzes the reversible conversion of ribose-5-phosphate to ribulose 5-phosphate. This chain is Ribose-5-phosphate isomerase A, found in Haemophilus influenzae (strain ATCC 51907 / DSM 11121 / KW20 / Rd).